We begin with the raw amino-acid sequence, 93 residues long: DNA-directed RNA polymerase subunit omega (93 aa).

This sequence belongs to the RNA polymerase subunit omega family. As to quaternary structure, the RNAP catalytic core consists of 2 alpha, 1 beta, 1 beta' and 1 omega subunit. When a sigma factor is associated with the core the holoenzyme is formed, which can initiate transcription.

It catalyses the reaction RNA(n) + a ribonucleoside 5'-triphosphate = RNA(n+1) + diphosphate. Promotes RNA polymerase assembly. Latches the N- and C-terminal regions of the beta' subunit thereby facilitating its interaction with the beta and alpha subunits. In Shewanella loihica (strain ATCC BAA-1088 / PV-4), this protein is DNA-directed RNA polymerase subunit omega.